Consider the following 230-residue polypeptide: Orotidine 5'-phosphate decarboxylase (230 aa).

Substrate is bound by residues Asp-10, Lys-32, 59–68 (DLKFHDIPRT), Thr-116, Arg-177, Gln-186, Gly-206, and Arg-207. Lys-61 functions as the Proton donor in the catalytic mechanism.

Belongs to the OMP decarboxylase family. Type 1 subfamily. As to quaternary structure, homodimer.

The enzyme catalyses orotidine 5'-phosphate + H(+) = UMP + CO2. It functions in the pathway pyrimidine metabolism; UMP biosynthesis via de novo pathway; UMP from orotate: step 2/2. Functionally, catalyzes the decarboxylation of orotidine 5'-monophosphate (OMP) to uridine 5'-monophosphate (UMP). This Methylacidiphilum infernorum (isolate V4) (Methylokorus infernorum (strain V4)) protein is Orotidine 5'-phosphate decarboxylase.